A 372-amino-acid polypeptide reads, in one-letter code: tRNA-specific 2-thiouridylase MnmA (372 aa).

Residues 11–18 (GMSGGVDS) and Met-37 each bind ATP. Positions 97-99 (NPD) are interaction with target base in tRNA. The active-site Nucleophile is Cys-102. Cys-102 and Cys-199 are oxidised to a cystine. Gly-126 is a binding site for ATP. Residues 149–151 (KDQ) form an interaction with tRNA region. The Cysteine persulfide intermediate role is filled by Cys-199. The tract at residues 309 to 310 (RY) is interaction with tRNA.

Belongs to the MnmA/TRMU family.

It localises to the cytoplasm. The catalysed reaction is S-sulfanyl-L-cysteinyl-[protein] + uridine(34) in tRNA + AH2 + ATP = 2-thiouridine(34) in tRNA + L-cysteinyl-[protein] + A + AMP + diphosphate + H(+). Functionally, catalyzes the 2-thiolation of uridine at the wobble position (U34) of tRNA, leading to the formation of s(2)U34. The chain is tRNA-specific 2-thiouridylase MnmA from Staphylococcus aureus (strain MSSA476).